A 152-amino-acid chain; its full sequence is Protein-export protein SecB (152 aa).

This sequence belongs to the SecB family. In terms of assembly, homotetramer, a dimer of dimers. One homotetramer interacts with 1 SecA dimer.

The protein localises to the cytoplasm. In terms of biological role, one of the proteins required for the normal export of preproteins out of the cell cytoplasm. It is a molecular chaperone that binds to a subset of precursor proteins, maintaining them in a translocation-competent state. It also specifically binds to its receptor SecA. In Rickettsia bellii (strain RML369-C), this protein is Protein-export protein SecB.